Consider the following 2089-residue polypeptide: Non-reducing polyketide synthase PKS16 (2089 aa).

The N-terminal acylcarrier protein transacylase (SAT) domain (SAT) stretch occupies residues 8–243 (VLFGDQTVDP…IKLPITAAFH (236 aa)). Residues 342-364 (AGIEVSRSTEMQPRQEQRTKPRS) form a disordered region. The segment covering 354–364 (PRQEQRTKPRS) has biased composition (basic and acidic residues). One can recognise a Ketosynthase family 3 (KS3) domain in the interval 364-793 (SSDIAIIGYA…GGNTSLLIED (430 aa)). Residues cysteine 536, histidine 671, and histidine 710 each act as for beta-ketoacyl synthase activity in the active site. Residues 891 to 1214 (VFLFTGQGSQ…SIANAYNSGV (324 aa)) form a malonyl-CoA:ACP transacylase (MAT) domain region. The tract at residues 1273–1586 (TTCLQVIENE…KRTTLQSLLG (314 aa)) is product template (PT) domain. An N-terminal hotdog fold region spans residues 1276–1408 (LQVIENETFT…CTVMYGDGHQ (133 aa)). One can recognise a PKS/mFAS DH domain in the interval 1276–1582 (LQVIENETFT…FQQMKRTTLQ (307 aa)). Histidine 1309 (proton acceptor; for dehydratase activity) is an active-site residue. The tract at residues 1435–1582 (IHRMLKEMIY…FQQMKRTTLQ (148 aa)) is C-terminal hotdog fold. Aspartate 1495 acts as the Proton donor; for dehydratase activity in catalysis. Residues 1617–1694 (QSPVAGFSKV…ELRAFFLDKM (78 aa)) enclose the Carrier 1 domain. At serine 1654 the chain carries O-(pantetheine 4'-phosphoryl)serine. The disordered stretch occupies residues 1697–1730 (PQATANDDDSDDSSDDEGPGFSRSQSNSTISTPE). Acidic residues predominate over residues 1702 to 1714 (NDDDSDDSSDDEG). Polar residues predominate over residues 1718 to 1728 (SRSQSNSTIST). One can recognise a Carrier 2 domain in the interval 1729 to 1806 (PEEPDVVNVL…DVQKALGAAP (78 aa)). Serine 1766 is subject to O-(pantetheine 4'-phosphoryl)serine. Residues 1848-2083 (LFLLPDGAGS…VVGGNHFSIM (236 aa)) form a thioesterase (TE) domain region.

It participates in secondary metabolite biosynthesis. Non-reducing polyketide synthase; part of the gene cluster that mediates the biosynthesis of orcinol depsidone grayanic acid (GRA), the only major secondary metabolite known in C.grayi. The first step consists in the ring and depside synthesis by PKS16 leading to 4-O-demethylsphaerophorin, involving different orcinol-like rings, one with acetyl CoA and the other with octanoyl CoA as the starter. Further depsidone formation by the GRA cluster-specific cytochrome P450 leads to 4-O-demethylgrayanic acid. Finally, the cluster specific O-methyltransferase probably converts the 4-O-demethylgrayanic acid into grayanic acid. The chain is Non-reducing polyketide synthase PKS16 from Cladonia grayi (Gray's cup lichen).